Consider the following 558-residue polypeptide: MAALTRDPQFQKLQQWYREHRSELNLRRLFDANKDRFNHFSLTLNTNHGHILVDYSKNLVTEDVMRMLVDLAKSRGVEAARERMFNGEKINYTEGRAVLHVALRNRSNTPILVDGKDVMPEVNKVLDKMKSFCQRVRSGDWKGYTGKTITDVINIGIGGSDLGPLMVTEALKPYSSGGPRVWYVSNIDGTHIAKTLAQLNPESSLFIIASKTFTTQETITNAETAKEWFLQAAKDPSAVAKHFVALSTNTTKVKEFGIDPQNMFEFWDWVGGRYSLWSAIGLSIALHVGFDNFEQLLSGAHWMDQHFRTTPLEKNAPVLLALLGIWYINCFGCETHAMLPYDQYLHRFAAYFQQGDMESNGKYITKSGTRVDHQTGPIVWGEPGTNGQHAFYQLIHQGTKMIPCDFLIPVQTQHPIRKGLHHKILLANFLAQTEALMRGKSTEEARKELQAAGKSPEDLERLLPHKVFEGNRPTNSIVFTKLTPFMLGALVAMYEHKIFVQGIIWDINSFDQWGVELGKQLAKKIEPELDGSAQVTSHDASTNGLINFIKQQREARVQ.

N-acetylalanine is present on A2. K12 is modified (N6-acetyllysine). N6-(2-hydroxyisobutyryl)lysine is present on K34. S107 is subject to Phosphoserine. T109 bears the Phosphothreonine mark. K142 is subject to N6-acetyllysine. 159–160 (GS) provides a ligand contact to D-glucose 6-phosphate. Phosphoserine; by CK2 is present on S185. Residue 210–215 (SKTFTT) coordinates D-glucose 6-phosphate. T250 carries the post-translational modification Phosphothreonine. Residues Q354, E358, and H389 each coordinate D-glucose 6-phosphate. E358 acts as the Proton donor in catalysis. Residue H389 is part of the active site. Position 454 is an N6-acetyllysine; alternate (K454). At K454 the chain carries N6-malonyllysine; alternate. N6-succinyllysine; alternate is present on K454. At S455 the chain carries Phosphoserine. D-glucose 6-phosphate is bound at residue K519. Residue K519 is part of the active site.

It belongs to the GPI family. Homodimer; in the catalytically active form. Monomer in the secreted form. Post-translationally, phosphorylation at Ser-185 by CK2 has been shown to decrease enzymatic activity and may contribute to secretion by a non-classical secretory pathway. ISGylated.

It is found in the cytoplasm. It localises to the secreted. It catalyses the reaction alpha-D-glucose 6-phosphate = beta-D-fructose 6-phosphate. It functions in the pathway carbohydrate degradation; glycolysis; D-glyceraldehyde 3-phosphate and glycerone phosphate from D-glucose: step 2/4. With respect to regulation, strongly inhibited by erythrose 4-phosphate. Its function is as follows. In the cytoplasm, catalyzes the conversion of glucose-6-phosphate to fructose-6-phosphate, the second step in glycolysis, and the reverse reaction during gluconeogenesis. Besides it's role as a glycolytic enzyme, also acts as a secreted cytokine: acts as an angiogenic factor (AMF) that stimulates endothelial cell motility. Acts as a neurotrophic factor, neuroleukin, for spinal and sensory neurons. It is secreted by lectin-stimulated T-cells and induces immunoglobulin secretion. The polypeptide is Glucose-6-phosphate isomerase (Homo sapiens (Human)).